Reading from the N-terminus, the 675-residue chain is DNA ligase (675 aa).

Residues 32–36, 81–82, and glutamate 113 contribute to the NAD(+) site; these read DAEYD and SL. Residue lysine 115 is the N6-AMP-lysine intermediate of the active site. The NAD(+) site is built by arginine 136, glutamate 173, lysine 291, and lysine 315. Residues cysteine 409, cysteine 412, cysteine 427, and cysteine 433 each contribute to the Zn(2+) site. One can recognise a BRCT domain in the interval 595 to 675; it reads SEKTYFFNKK…ELNSLIRIKE (81 aa).

The protein belongs to the NAD-dependent DNA ligase family. LigA subfamily. The cofactor is Mg(2+). Requires Mn(2+) as cofactor.

It carries out the reaction NAD(+) + (deoxyribonucleotide)n-3'-hydroxyl + 5'-phospho-(deoxyribonucleotide)m = (deoxyribonucleotide)n+m + AMP + beta-nicotinamide D-nucleotide.. Its function is as follows. DNA ligase that catalyzes the formation of phosphodiester linkages between 5'-phosphoryl and 3'-hydroxyl groups in double-stranded DNA using NAD as a coenzyme and as the energy source for the reaction. It is essential for DNA replication and repair of damaged DNA. The protein is DNA ligase of Buchnera aphidicola subsp. Acyrthosiphon pisum (strain 5A).